Reading from the N-terminus, the 551-residue chain is Arginine--tRNA ligase (551 aa).

A 'HIGH' region motif is present at residues 123–133; sequence ANPTGPLTIGR.

This sequence belongs to the class-I aminoacyl-tRNA synthetase family. As to quaternary structure, monomer.

The protein resides in the cytoplasm. It carries out the reaction tRNA(Arg) + L-arginine + ATP = L-arginyl-tRNA(Arg) + AMP + diphosphate. The chain is Arginine--tRNA ligase from Chlorobium phaeobacteroides (strain DSM 266 / SMG 266 / 2430).